The sequence spans 246 residues: Pyridoxine 5'-phosphate synthase (246 aa).

Asn12 is a binding site for 3-amino-2-oxopropyl phosphate. 14–15 (DH) serves as a coordination point for 1-deoxy-D-xylulose 5-phosphate. Arg23 lines the 3-amino-2-oxopropyl phosphate pocket. Catalysis depends on His48, which acts as the Proton acceptor. 1-deoxy-D-xylulose 5-phosphate is bound by residues Arg50 and His55. The active-site Proton acceptor is the Glu75. Residue Thr105 coordinates 1-deoxy-D-xylulose 5-phosphate. Residue His196 is the Proton donor of the active site. Residues Gly197 and 218 to 219 (GH) contribute to the 3-amino-2-oxopropyl phosphate site.

The protein belongs to the PNP synthase family. As to quaternary structure, homooctamer; tetramer of dimers.

It is found in the cytoplasm. The catalysed reaction is 3-amino-2-oxopropyl phosphate + 1-deoxy-D-xylulose 5-phosphate = pyridoxine 5'-phosphate + phosphate + 2 H2O + H(+). It functions in the pathway cofactor biosynthesis; pyridoxine 5'-phosphate biosynthesis; pyridoxine 5'-phosphate from D-erythrose 4-phosphate: step 5/5. In terms of biological role, catalyzes the complicated ring closure reaction between the two acyclic compounds 1-deoxy-D-xylulose-5-phosphate (DXP) and 3-amino-2-oxopropyl phosphate (1-amino-acetone-3-phosphate or AAP) to form pyridoxine 5'-phosphate (PNP) and inorganic phosphate. The polypeptide is Pyridoxine 5'-phosphate synthase (Pseudomonas savastanoi pv. phaseolicola (strain 1448A / Race 6) (Pseudomonas syringae pv. phaseolicola (strain 1448A / Race 6))).